A 368-amino-acid polypeptide reads, in one-letter code: Histidinol-phosphate aminotransferase (368 aa).

Position 229 is an N6-(pyridoxal phosphate)lysine (Lys229).

It belongs to the class-II pyridoxal-phosphate-dependent aminotransferase family. Histidinol-phosphate aminotransferase subfamily. In terms of assembly, homodimer. Pyridoxal 5'-phosphate serves as cofactor.

The enzyme catalyses L-histidinol phosphate + 2-oxoglutarate = 3-(imidazol-4-yl)-2-oxopropyl phosphate + L-glutamate. The protein operates within amino-acid biosynthesis; L-histidine biosynthesis; L-histidine from 5-phospho-alpha-D-ribose 1-diphosphate: step 7/9. This Acidovorax sp. (strain JS42) protein is Histidinol-phosphate aminotransferase.